A 375-amino-acid polypeptide reads, in one-letter code: MKKVLVVFGTRPEAIKMAPLVKALQADTSMQCGVCVTAQHREMLDQVLRLFDIRPDYDLNVMKPGQDLYELTSNILTGVKSVLESFAPDLVLVHGDTSTTLATTLAAYYKQVPVGHIEAGLRTGNLYSPWPEEANRKVTGSLAALHFAPTERSRRNLLNEGVPADAVVVTGNTVIDALLSVRQRLQTDTALCRHTASLIPYRIGERRIVLVTGHRRESFGDGFERICAALASIARAHPDVDIVYPVHLNPNVREPVGRLLKGIDNIHLIEPLDYLPFVYLMDKAHIILTDSGGIQEEAPSLGKPVLVMRDTTERPEAVEAGTVRLVGTSVDALVDSATTLLNDDSAYEAMSRAHNPYGDGAASARITRAIQAYFA.

It belongs to the UDP-N-acetylglucosamine 2-epimerase family.

Its subcellular location is the cytoplasm. The enzyme catalyses UDP-N-acetyl-alpha-D-glucosamine = UDP-N-acetyl-alpha-D-mannosamine. The protein operates within glycan metabolism; exopolysaccharide EPS I biosynthesis. In terms of biological role, may be involved in synthesis of N-acetyltrideoxygalactose, a component of exopolysaccharide EPS I which functions as a virulence factor. The protein is Probable UDP-N-acetylglucosamine 2-epimerase (epsC) of Ralstonia nicotianae (strain ATCC BAA-1114 / GMI1000) (Ralstonia solanacearum).